Consider the following 386-residue polypeptide: MATTKSFLILFFMILATTSSTCAKLEEMVTVLSIDGGGIKGIIPAIILEFLEGQLQEVDNNKDARLADYFDVIGGTSTGGLLTAMITTPNENNRPFAAAKDIVPFYFEHGPHIFNYSGSIIGPMYDGKYLLQVLQEKLGETRVHQALTEVAISSFDIKTNKPVIFTKSNLAKSPELDAKMYDICYSTAAAPIYFPPHYFITHTSNGDIYEFNLVDGGVATVGDPALLSLSVATRLAQEDPAFSSIKSLDYKQMLLLSLGTGTNSEFDKTYTAQEAAKWGPLRWMLAIQQMTNAASSYMTDYYISTVFQARHSQNNYLRVQENALTGTTTEMDDASEANMELLVQVGETLLKKPVSKDSPETYEEALKRFAKLLSNRKKLRANKASY.

Positions Met-1 to Ala-23 are cleaved as a signal peptide. Residues Leu-32 to Leu-229 form the PNPLA domain. A GXGXXG motif is present at residues Gly-36–Gly-41. The GXSXG motif lies at Gly-75–Gly-79. The active-site Nucleophile is Ser-77. A glycan (N-linked (GlcNAc...) asparagine) is linked at Asn-115. Residue Asp-215 is the Proton acceptor of the active site. The DGA/G motif lies at Asp-215–Gly-217. A coiled-coil region spans residues Glu-321 to Ala-384.

This sequence belongs to the patatin family. Tuber.

It localises to the vacuole. Probable lipolytic acyl hydrolase (LAH), an activity which is thought to be involved in the response of tubers to pathogens. This chain is Patatin-10, found in Solanum tuberosum (Potato).